The chain runs to 67 residues: Large ribosomal subunit protein bL35 (67 aa).

Belongs to the bacterial ribosomal protein bL35 family.

This Caldanaerobacter subterraneus subsp. tengcongensis (strain DSM 15242 / JCM 11007 / NBRC 100824 / MB4) (Thermoanaerobacter tengcongensis) protein is Large ribosomal subunit protein bL35.